The primary structure comprises 187 residues: UPF0301 protein plu1183 (187 aa).

This sequence belongs to the UPF0301 (AlgH) family.

This chain is UPF0301 protein plu1183, found in Photorhabdus laumondii subsp. laumondii (strain DSM 15139 / CIP 105565 / TT01) (Photorhabdus luminescens subsp. laumondii).